Consider the following 107-residue polypeptide: C-X-C motif chemokine 3 (107 aa).

The first 34 residues, 1-34 (MAHATLSAAPSNPRLLRVALLLLLLVAASRRAAG), serve as a signal peptide directing secretion. 2 cysteine pairs are disulfide-bonded: Cys-43–Cys-69 and Cys-45–Cys-85.

This sequence belongs to the intercrine alpha (chemokine CxC) family. N-terminal processed form GRO-gamma(5-73) is produced by proteolytic cleavage after secretion from peripheral blood monocytes.

The protein localises to the secreted. In terms of biological role, ligand for CXCR2. Has chemotactic activity for neutrophils. May play a role in inflammation and exert its effects on endothelial cells in an autocrine fashion. In vitro, the processed form GRO-gamma(5-73) shows a fivefold higher chemotactic activity for neutrophilic granulocytes. This chain is C-X-C motif chemokine 3 (CXCL3), found in Homo sapiens (Human).